A 299-amino-acid chain; its full sequence is Taste receptor type 2 member 50 (299 aa).

A topological domain (extracellular) is located at residue methionine 1. A helical membrane pass occupies residues 2–22 (VTFLHIFFSILILVLFVLGNF). At 23 to 55 (ANGFIALVNFIDLVKRKKISSADQILTALAVSR) the chain is on the cytoplasmic side. The chain crosses the membrane as a helical span at residues 56-76 (IGLLWALLLNWYLTVLNPAFY). The Extracellular segment spans residues 77–87 (SVELRITSYNA). The helical transmembrane segment at 88–108 (WVVTNHFSMWLAASLSIFYLL) threads the bilayer. The Cytoplasmic segment spans residues 109–126 (KIANFSNLIFLHLKRRVR). The chain crosses the membrane as a helical span at residues 127–147 (SVILVILLGPLTFLVCHLFVA). Residues 148–181 (NMDESMSAEEYEGNMTGKLKLRNTVHLSYLTVTT) are Extracellular-facing. Asparagine 161 carries N-linked (GlcNAc...) asparagine glycosylation. Residues 182-202 (LWSFIPFTLSLISFLMLICSL) traverse the membrane as a helical segment. At 203 to 229 (CKHVKKMQLHGEGSQDLSTKVHIKALQ) the chain is on the cytoplasmic side. A helical transmembrane segment spans residues 230 to 250 (TLISFLLLCAIFFLFLIISIW). Topologically, residues 251–259 (NPRRLQNDP) are extracellular. Residues 260 to 280 (VVVVSKAVGNIYLALDSFILI) form a helical membrane-spanning segment. At 281 to 299 (WRTKKLKHTFLLILCQIRC) the chain is on the cytoplasmic side.

This sequence belongs to the G-protein coupled receptor T2R family.

The protein resides in the membrane. Receptor that may play a role in the perception of bitterness and is gustducin-linked. May play a role in sensing the chemical composition of the gastrointestinal content. The activity of this receptor may stimulate alpha gustducin, mediate PLC-beta-2 activation and lead to the gating of TRPM5. The sequence is that of Taste receptor type 2 member 50 (TAS2R50) from Pongo pygmaeus (Bornean orangutan).